The chain runs to 531 residues: Lysine--tRNA ligase, mitochondrial (531 aa).

The N-terminal 18 residues, 1–18, are a transit peptide targeting the mitochondrion; it reads MISRGLLSKGILSIIKRK.

The protein belongs to the class-II aminoacyl-tRNA synthetase family.

It localises to the mitochondrion. It catalyses the reaction tRNA(Lys) + L-lysine + ATP = L-lysyl-tRNA(Lys) + AMP + diphosphate. This is Lysine--tRNA ligase, mitochondrial (msk1) from Schizosaccharomyces pombe (strain 972 / ATCC 24843) (Fission yeast).